The chain runs to 282 residues: Bifunctional protein FolD 1 (282 aa).

NADP(+) contacts are provided by residues 167–169 and Ser-192; that span reads GRS.

This sequence belongs to the tetrahydrofolate dehydrogenase/cyclohydrolase family. In terms of assembly, homodimer.

The catalysed reaction is (6R)-5,10-methylene-5,6,7,8-tetrahydrofolate + NADP(+) = (6R)-5,10-methenyltetrahydrofolate + NADPH. It catalyses the reaction (6R)-5,10-methenyltetrahydrofolate + H2O = (6R)-10-formyltetrahydrofolate + H(+). The protein operates within one-carbon metabolism; tetrahydrofolate interconversion. Functionally, catalyzes the oxidation of 5,10-methylenetetrahydrofolate to 5,10-methenyltetrahydrofolate and then the hydrolysis of 5,10-methenyltetrahydrofolate to 10-formyltetrahydrofolate. The polypeptide is Bifunctional protein FolD 1 (Colwellia psychrerythraea (strain 34H / ATCC BAA-681) (Vibrio psychroerythus)).